Here is a 355-residue protein sequence, read N- to C-terminus: S-adenosylmethionine:tRNA ribosyltransferase-isomerase (355 aa).

It belongs to the QueA family. In terms of assembly, monomer.

The protein localises to the cytoplasm. The enzyme catalyses 7-aminomethyl-7-carbaguanosine(34) in tRNA + S-adenosyl-L-methionine = epoxyqueuosine(34) in tRNA + adenine + L-methionine + 2 H(+). The protein operates within tRNA modification; tRNA-queuosine biosynthesis. Its function is as follows. Transfers and isomerizes the ribose moiety from AdoMet to the 7-aminomethyl group of 7-deazaguanine (preQ1-tRNA) to give epoxyqueuosine (oQ-tRNA). This chain is S-adenosylmethionine:tRNA ribosyltransferase-isomerase, found in Pectobacterium carotovorum subsp. carotovorum (strain PC1).